Reading from the N-terminus, the 518-residue chain is MTLAEFWPLCLRRLHDMLPHGQFAQWIAPLTVGEEGGVWVVYGKNQFACNMLKSQFAGKIEAVREELAAGRSAFVFKPGEGVCYEMAAVEGAVEPAEPSLHAGSEEMPVQEVLLDELPSEEPVKPAASKTAADILAERMRNLPHEPRQAAGSASRPESAAVAKARTDAQRDAEEARYEQTNLSPDYTFDTLVEGKGNRLAAAAAQAIAESPGQSYNPFFLYGSTGLGKTHLVQAVGNELLKNRPDAKVRYMHSDDYIRSFMKAVRNNTYDVFKQQYKQYDLLIIDDIQFIKGKDRTMEEFFYLYNHFHNEKKQLILTCDVLPAKIEGMDDRLKSRFSWGLTLELEPPELEMRIAILQKKAEAAGISIEDEAALFIANLIRSNVRELEGAFNRVGASSRFMNRPVIDIDLARTALQDIIAEKHKVITADIIIDAVAKYYRIKISDVLGKKRTRNIARPRQVAMSLTKELTTLSLPSIGDSFGGRDHTTVMHGIRAVAKLREEDPELAQDYEKLLILIQN.

The tract at residues 1-72 (MTLAEFWPLC…VREELAAGRS (72 aa)) is domain I, interacts with DnaA modulators. Positions 72-180 (SAFVFKPGEG…DAEEARYEQT (109 aa)) are domain II. Residues 145–178 (EPRQAAGSASRPESAAVAKARTDAQRDAEEARYE) are disordered. The segment covering 164–177 (ARTDAQRDAEEARY) has biased composition (basic and acidic residues). Positions 181-397 (NLSPDYTFDT…GAFNRVGASS (217 aa)) are domain III, AAA+ region. The ATP site is built by Gly-225, Gly-227, Lys-228, and Thr-229. A domain IV, binds dsDNA region spans residues 398-518 (RFMNRPVIDI…YEKLLILIQN (121 aa)).

Belongs to the DnaA family. In terms of assembly, oligomerizes as a right-handed, spiral filament on DNA at oriC.

The protein localises to the cytoplasm. In terms of biological role, plays an essential role in the initiation and regulation of chromosomal replication. ATP-DnaA binds to the origin of replication (oriC) to initiate formation of the DNA replication initiation complex once per cell cycle. Binds the DnaA box (a 9 base pair repeat at the origin) and separates the double-stranded (ds)DNA. Forms a right-handed helical filament on oriC DNA; dsDNA binds to the exterior of the filament while single-stranded (ss)DNA is stabiized in the filament's interior. The ATP-DnaA-oriC complex binds and stabilizes one strand of the AT-rich DNA unwinding element (DUE), permitting loading of DNA polymerase. After initiation quickly degrades to an ADP-DnaA complex that is not apt for DNA replication. Binds acidic phospholipids. This chain is Chromosomal replication initiator protein DnaA, found in Neisseria meningitidis serogroup A / serotype 4A (strain DSM 15465 / Z2491).